Here is a 189-residue protein sequence, read N- to C-terminus: Protein GrpE (189 aa).

The segment covering Met1–Ser38 has biased composition (basic and acidic residues). A disordered region spans residues Met1–Gln54.

This sequence belongs to the GrpE family. As to quaternary structure, homodimer.

The protein localises to the cytoplasm. Participates actively in the response to hyperosmotic and heat shock by preventing the aggregation of stress-denatured proteins, in association with DnaK and GrpE. It is the nucleotide exchange factor for DnaK and may function as a thermosensor. Unfolded proteins bind initially to DnaJ; upon interaction with the DnaJ-bound protein, DnaK hydrolyzes its bound ATP, resulting in the formation of a stable complex. GrpE releases ADP from DnaK; ATP binding to DnaK triggers the release of the substrate protein, thus completing the reaction cycle. Several rounds of ATP-dependent interactions between DnaJ, DnaK and GrpE are required for fully efficient folding. The sequence is that of Protein GrpE from Tropheryma whipplei (strain TW08/27) (Whipple's bacillus).